A 319-amino-acid chain; its full sequence is Cytochrome c biogenesis protein CcsA (319 aa).

The next 7 helical transmembrane spans lie at 9–29 (ILTH…LITL), 44–64 (GVIG…AYSG), 71–91 (LYES…FPYF), 143–163 (MVLG…LLVI), 225–245 (IISL…VWAN), 259–273 (TWAF…IYLH), and 286–306 (AIVA…VNLL).

Belongs to the CcmF/CycK/Ccl1/NrfE/CcsA family. As to quaternary structure, may interact with Ccs1.

The protein localises to the plastid. Its subcellular location is the chloroplast thylakoid membrane. In terms of biological role, required during biogenesis of c-type cytochromes (cytochrome c6 and cytochrome f) at the step of heme attachment. The sequence is that of Cytochrome c biogenesis protein CcsA from Oenothera biennis (German evening primrose).